Consider the following 123-residue polypeptide: MSIIGVGIDVAEVERFGAALERTPALAGRLFLESELLLPGGERRGVASLAARFAAKEALAKALGAPAGLLWTDAEVWVEAGGRPRLRVTGTVAARAAELGVASWHVSLSHDAGIASAVVIAEG.

Residues Asp9 and Glu57 each coordinate Mg(2+).

This sequence belongs to the P-Pant transferase superfamily. AcpS family. Mg(2+) is required as a cofactor.

It is found in the cytoplasm. The catalysed reaction is apo-[ACP] + CoA = holo-[ACP] + adenosine 3',5'-bisphosphate + H(+). Transfers the 4'-phosphopantetheine moiety from coenzyme A to a Ser of acyl-carrier-protein. The sequence is that of Holo-[acyl-carrier-protein] synthase from Streptomyces coelicolor (strain ATCC BAA-471 / A3(2) / M145).